Reading from the N-terminus, the 918-residue chain is Protein translocase subunit SecA (918 aa).

ATP contacts are provided by residues Gln87, 105–109 (GEGKT), and Asp494. Basic and acidic residues predominate over residues 863–883 (KQDDTSPKEYKKIGQEQRAEV). A disordered region spans residues 863-918 (KQDDTSPKEYKKIGQEQRAEVDMFGNELKSNKTKPQVSSTTSSGGGSERRSSRRKK).

The protein belongs to the SecA family. In terms of assembly, monomer and homodimer. Part of the essential Sec protein translocation apparatus which comprises SecA, SecYEG and auxiliary proteins SecDF. Other proteins may also be involved.

It localises to the cell inner membrane. The protein localises to the cytoplasm. The enzyme catalyses ATP + H2O + cellular proteinSide 1 = ADP + phosphate + cellular proteinSide 2.. Part of the Sec protein translocase complex. Interacts with the SecYEG preprotein conducting channel. Has a central role in coupling the hydrolysis of ATP to the transfer of proteins into and across the cell membrane, serving as an ATP-driven molecular motor driving the stepwise translocation of polypeptide chains across the membrane. This is Protein translocase subunit SecA from Leptospira biflexa serovar Patoc (strain Patoc 1 / Ames).